We begin with the raw amino-acid sequence, 187 residues long: Flavin-dependent monooxygenase, reductase subunit HsaB (187 aa).

Residues 32–36 (PVGFA), 38–39 (QS), 53–55 (CPT), 59–60 (RS), and 85–86 (RF) contribute to the FAD site. Position 152–155 (152–155 (FYRG)) interacts with NAD(+).

Belongs to the non-flavoprotein flavin reductase family. As to quaternary structure, hsaAB monooxygenase consists of an oxygenase component HsaA and a reductase component HsaB.

The enzyme catalyses a reduced flavin + NAD(+) = an oxidized flavin + NADH + 2 H(+). It functions in the pathway lipid metabolism; steroid biosynthesis. Catalyzes the reduction of free flavins (FMN or FAD) by NADH. Subsequently, the reduced flavins diffuse to the HsaA oxygenase subunit. The sequence is that of Flavin-dependent monooxygenase, reductase subunit HsaB (hsaB) from Mycobacterium tuberculosis (strain CDC 1551 / Oshkosh).